The primary structure comprises 482 residues: High affinity 3',5'-cyclic-AMP phosphodiesterase 7A (482 aa).

The residue at position 84 (S84) is a Phosphoserine. In terms of domain architecture, PDEase spans 136-458 (LDDDYNGQAK…ASWKGLQREQ (323 aa)). H212 serves as the catalytic Proton donor. A divalent metal cation-binding residues include H216, H252, D253, and D362.

Belongs to the cyclic nucleotide phosphodiesterase family. PDE7 subfamily. In terms of assembly, interacts with CBFA2T3. A divalent metal cation is required as a cofactor. Found at high levels in skeletal muscle and at low levels in a variety of tissues including brain and heart. It is expressed as well in two T-cell lines. In terms of tissue distribution, found abundantly in skeletal muscle and at low levels in heart.

The protein resides in the cytoplasm. The protein localises to the cytosol. The catalysed reaction is 3',5'-cyclic AMP + H2O = AMP + H(+). Its pathway is purine metabolism; 3',5'-cyclic AMP degradation; AMP from 3',5'-cyclic AMP: step 1/1. Insensitive to all selective PDE inhibitors. In terms of biological role, hydrolyzes the second messenger cAMP, which is a key regulator of many important physiological processes. May have a role in muscle signal transduction. In Homo sapiens (Human), this protein is High affinity 3',5'-cyclic-AMP phosphodiesterase 7A.